Consider the following 526-residue polypeptide: NAD(P)H-quinone oxidoreductase chain 4 1 (526 aa).

The next 14 membrane-spanning stretches (helical) occupy residues 7–27, 35–55, 86–106, 114–134, 135–155, 168–188, 208–228, 242–262, 276–296, 310–330, 331–351, 374–396, 417–437, and 463–483; these read FPWLSALVLLPLLAAFGIPLL, WYALAVGALDLGLMAYIFGWH, LSFPLVLLSGLITTLAIVAAW, LFFFLLLLMYGAQVGVFLAQD, LLLFFLMWEIELVPVYLLIAI, FILYTAAASIFILVGSLAMAF, ALQILAYAAFLIAFGVKLPVF, SAPISMILAGVLLKMGGYGLI, FAPVLAVLGAVNIVYGALAAL, IAHMGFVLIGIAAFTELGLNG, ALLQMISHGLIAAVLFFLTGI, AFALFTAGSLASLALPGMSGFVG, GIALLAAVGIILTPIYLLSML, and MAVALCLLLPILGIGLYPRLA.

Belongs to the complex I subunit 4 family.

The protein resides in the cellular thylakoid membrane. The enzyme catalyses a plastoquinone + NADH + (n+1) H(+)(in) = a plastoquinol + NAD(+) + n H(+)(out). It carries out the reaction a plastoquinone + NADPH + (n+1) H(+)(in) = a plastoquinol + NADP(+) + n H(+)(out). In terms of biological role, NDH-1 shuttles electrons from NAD(P)H, via FMN and iron-sulfur (Fe-S) centers, to quinones in the respiratory chain. The immediate electron acceptor for the enzyme in this species is believed to be plastoquinone. Couples the redox reaction to proton translocation (for every two electrons transferred, four hydrogen ions are translocated across the cytoplasmic membrane), and thus conserves the redox energy in a proton gradient. The protein is NAD(P)H-quinone oxidoreductase chain 4 1 of Synechococcus sp. (strain JA-3-3Ab) (Cyanobacteria bacterium Yellowstone A-Prime).